The chain runs to 376 residues: N-acetyldiaminopimelate deacetylase (376 aa).

D69 is an active-site residue. Catalysis depends on E128, which acts as the Proton acceptor.

It belongs to the peptidase M20A family. N-acetyldiaminopimelate deacetylase subfamily.

The enzyme catalyses N-acetyl-(2S,6S)-2,6-diaminopimelate + H2O = (2S,6S)-2,6-diaminopimelate + acetate. It participates in amino-acid biosynthesis; L-lysine biosynthesis via DAP pathway; LL-2,6-diaminopimelate from (S)-tetrahydrodipicolinate (acetylase route): step 3/3. Functionally, catalyzes the conversion of N-acetyl-diaminopimelate to diaminopimelate and acetate. In Streptococcus pneumoniae (strain 70585), this protein is N-acetyldiaminopimelate deacetylase.